We begin with the raw amino-acid sequence, 471 residues long: tRNA-2-methylthio-N(6)-dimethylallyladenosine synthase (471 aa).

The MTTase N-terminal domain maps to lysine 29–arginine 146. Positions 38, 74, 109, 187, 191, and 194 each coordinate [4Fe-4S] cluster. Residues arginine 173–glutamate 405 enclose the Radical SAM core domain. Residues lysine 408 to aspartate 467 enclose the TRAM domain.

The protein belongs to the methylthiotransferase family. MiaB subfamily. Monomer. The cofactor is [4Fe-4S] cluster.

It is found in the cytoplasm. It carries out the reaction N(6)-dimethylallyladenosine(37) in tRNA + (sulfur carrier)-SH + AH2 + 2 S-adenosyl-L-methionine = 2-methylsulfanyl-N(6)-dimethylallyladenosine(37) in tRNA + (sulfur carrier)-H + 5'-deoxyadenosine + L-methionine + A + S-adenosyl-L-homocysteine + 2 H(+). Catalyzes the methylthiolation of N6-(dimethylallyl)adenosine (i(6)A), leading to the formation of 2-methylthio-N6-(dimethylallyl)adenosine (ms(2)i(6)A) at position 37 in tRNAs that read codons beginning with uridine. The chain is tRNA-2-methylthio-N(6)-dimethylallyladenosine synthase from Neorickettsia sennetsu (strain ATCC VR-367 / Miyayama) (Ehrlichia sennetsu).